Reading from the N-terminus, the 90-residue chain is MKTLPVLVLSLTLLTVFSETSPILTEKQAKQLLRSRRQDRPSKPGFPDEPMREYMHHLLALEHRAEEQFLEHWLNPHCKPHCDRNRIHPV.

Residues 1–18 form the signal peptide; that stretch reads MKTLPVLVLSLTLLTVFS. Residues 28 to 50 are disordered; that stretch reads QAKQLLRSRRQDRPSKPGFPDEP.

The protein resides in the secreted. This is an uncharacterized protein from Homo sapiens (Human).